The primary structure comprises 539 residues: 2-isopropylmalate synthase (539 aa).

Residues 8 to 269 enclose the Pyruvate carboxyltransferase domain; that stretch reads VLIFDTTLRD…YFNPFFGRPP (262 aa). 4 residues coordinate Mn(2+): D17, H208, H210, and N244. Positions 408–539 are regulatory domain; it reads QLKLVQVSCG…DLAKVDKKGI (132 aa).

Belongs to the alpha-IPM synthase/homocitrate synthase family. LeuA type 1 subfamily. As to quaternary structure, homodimer. Mn(2+) is required as a cofactor.

It localises to the cytoplasm. It carries out the reaction 3-methyl-2-oxobutanoate + acetyl-CoA + H2O = (2S)-2-isopropylmalate + CoA + H(+). The protein operates within amino-acid biosynthesis; L-leucine biosynthesis; L-leucine from 3-methyl-2-oxobutanoate: step 1/4. In terms of biological role, catalyzes the condensation of the acetyl group of acetyl-CoA with 3-methyl-2-oxobutanoate (2-ketoisovalerate) to form 3-carboxy-3-hydroxy-4-methylpentanoate (2-isopropylmalate). This chain is 2-isopropylmalate synthase, found in Prochlorococcus marinus (strain NATL1A).